A 181-amino-acid polypeptide reads, in one-letter code: UPF0301 protein MXAN_2022 (181 aa).

This sequence belongs to the UPF0301 (AlgH) family.

This is UPF0301 protein MXAN_2022 from Myxococcus xanthus (strain DK1622).